The following is a 383-amino-acid chain: S-adenosylmethionine synthase (383 aa).

His-15 serves as a coordination point for ATP. Asp-17 is a Mg(2+) binding site. K(+) is bound at residue Glu-43. Glu-56 and Gln-99 together coordinate L-methionine. The segment at 99-109 is flexible loop; that stretch reads QSSDINQGVDR. ATP-binding positions include 164 to 166, 230 to 231, Asp-239, 245 to 246, Ala-262, and Lys-266; these read DAK, RF, and RK. Asp-239 provides a ligand contact to L-methionine. Lys-270 provides a ligand contact to L-methionine.

Belongs to the AdoMet synthase family. In terms of assembly, homotetramer; dimer of dimers. Mg(2+) serves as cofactor. K(+) is required as a cofactor.

The protein localises to the cytoplasm. The enzyme catalyses L-methionine + ATP + H2O = S-adenosyl-L-methionine + phosphate + diphosphate. It participates in amino-acid biosynthesis; S-adenosyl-L-methionine biosynthesis; S-adenosyl-L-methionine from L-methionine: step 1/1. In terms of biological role, catalyzes the formation of S-adenosylmethionine (AdoMet) from methionine and ATP. The overall synthetic reaction is composed of two sequential steps, AdoMet formation and the subsequent tripolyphosphate hydrolysis which occurs prior to release of AdoMet from the enzyme. The sequence is that of S-adenosylmethionine synthase from Mannheimia succiniciproducens (strain KCTC 0769BP / MBEL55E).